The primary structure comprises 133 residues: Gamma-crystallin 1 (133 aa).

Residues 1-41 (WMLYEHPNYTGHQYFLRRGEYPDFQQWMGLNDSIRSCRVIP) form the Beta/gamma crystallin 'Greek key' 2 domain. Positions 42–46 (QHRGS) are connecting peptide. Beta/gamma crystallin 'Greek key' domains lie at 47–87 (FRLR…NVLE) and 88–130 (GHWI…RRVQ).

This sequence belongs to the beta/gamma-crystallin family. Monomer.

Crystallins are the dominant structural components of the vertebrate eye lens. The sequence is that of Gamma-crystallin 1 from Rana temporaria (European common frog).